Here is a 1016-residue protein sequence, read N- to C-terminus: MASTEQWGAFLHQCLAHRIDVADFKNLSRLLFKRNPIAQGALIDVVLETRLAAGIKWDPLLPLYIDGLCKMGKLQISTVLAALLKHSSIHEKPGTDAAAAKQKQKCYTLMTDIRVIQDAMLAVSTGHAPKSLSETAGTFLAIADWIHAVVSWHHGQMNASQQAEGLMSSPDAVSLFESLGILLAAVSGTEKGLQVLSSDSNEGLKVKLGHALSAYLPLCVDLSLPLRNRLDALQKEFNLYGEPPPKNLGVSSLENLHVNGIQFEASIIDGPAINSRAGLYVYINAMLAGRPLVDDSMLLNYLTNRYGAHYDVLIQDLITAAFDVCSNAMYRNESSRTMFLFRSFLVNKLPSFFAAMLSASMVSIPMELCISHALSRLDPNTFPSFSQMFSMQGNTVLSDVRQEFLFACASHKLIPESSIERLLGENPMQALPVGYNKDDLVSQINTTPERAEQLINEIEFTEGNAGPIVGAITEVMQNLCNQKETMTLKNICNSLSRRPQALDVILLFRSPKQVLQPLCALLDSWHWDEDQGESQPVYDEFGSILLLVLVFKYRYDLSAYDLGIANNDSFVLRLLERGSSSQKLDELSESQNKHLGSWIGALFIAEGISEETMSACSPQEFYLLASTLFSQSLAACEAGKLEFETLKGGFEYLLEPFLLPSLVVALTWLGNHIWEAESDPSIPLKALHSLVSPSSISGEAKEIHRTVLNITARSLDEQLKDVRARHPSRTDIKPILDVLEPCLSFPRTGSCHRSELETWTTHAGNLLGSIRSTMQSLVLWCTSPDVNIPPPSYTHRQLVAGIRIVGATRLLAALLDELRLQTDANNGDLALDIAASLVCAPLPESFAVESSPYHPVAVDLAKDPVPRCPLLTLRDALALQHEAVPRTAEKDPARAEAVVRLYRRVAALAAPTAQVPNLDMNNLIQNMQLGVGVDGHDQMGLPAGGAGDAVGDEPNLDQMLDNAAAAAAAGIDSGVGQGMGGDMSGGLDTSIDDVLNAADMAVGNPEFLDLDMEGMF.

This sequence belongs to the Mediator complex subunit 5 family. As to quaternary structure, component of the Mediator complex.

It is found in the nucleus. Functionally, component of the Mediator complex, a coactivator involved in the regulated transcription of nearly all RNA polymerase II-dependent genes. Mediator functions as a bridge to convey information from gene-specific regulatory proteins to the basal RNA polymerase II transcription machinery. Mediator is recruited to promoters by direct interactions with regulatory proteins and serves as a scaffold for the assembly of a functional preinitiation complex with RNA polymerase II and the general transcription factors. This Aspergillus terreus (strain NIH 2624 / FGSC A1156) protein is Mediator of RNA polymerase II transcription subunit 5 (nut1).